The following is a 130-amino-acid chain: Small ribosomal subunit protein uS9 (130 aa).

It belongs to the universal ribosomal protein uS9 family.

This Blochmanniella floridana protein is Small ribosomal subunit protein uS9.